Consider the following 177-residue polypeptide: Large ribosomal subunit protein uL6 (177 aa).

It belongs to the universal ribosomal protein uL6 family. Part of the 50S ribosomal subunit.

This protein binds to the 23S rRNA, and is important in its secondary structure. It is located near the subunit interface in the base of the L7/L12 stalk, and near the tRNA binding site of the peptidyltransferase center. This Dinoroseobacter shibae (strain DSM 16493 / NCIMB 14021 / DFL 12) protein is Large ribosomal subunit protein uL6.